Here is a 129-residue protein sequence, read N- to C-terminus: Small ribosomal subunit protein eS8 (129 aa).

The tract at residues 1-29 is disordered; the sequence is MSVWQGRSRRKPTGGLYRPARKKRKYEMG.

Belongs to the eukaryotic ribosomal protein eS8 family. As to quaternary structure, part of the 30S ribosomal subunit.

The sequence is that of Small ribosomal subunit protein eS8 (rps8e) from Methanocaldococcus jannaschii (strain ATCC 43067 / DSM 2661 / JAL-1 / JCM 10045 / NBRC 100440) (Methanococcus jannaschii).